Consider the following 937-residue polypeptide: Inactive tyrosine-protein kinase transmembrane receptor ROR1 (937 aa).

Positions 1-29 (MHRPRRRGTRPPPLALLAALLLAARGADA) are cleaved as a signal peptide. Over 30–406 (QETELSVSAE…KEKNKMEILY (377 aa)) the chain is Extracellular. The 100-residue stretch at 42–141 (PTSSWNTSSE…VATNGKKVVS (100 aa)) folds into the Ig-like C2-type domain. Residues Asn-47 and Asn-66 are each glycosylated (N-linked (GlcNAc...) asparagine). Disulfide bonds link Cys-79–Cys-131, Cys-170–Cys-235, Cys-178–Cys-228, Cys-219–Cys-260, Cys-248–Cys-296, Cys-252–Cys-282, Cys-313–Cys-391, Cys-334–Cys-374, and Cys-362–Cys-386. The 135-residue stretch at 165–299 (EEDGFCQPYR…SPEAANCIRI (135 aa)) folds into the FZ domain. An N-linked (GlcNAc...) asparagine glycan is attached at Asn-184. In terms of domain architecture, Kringle spans 312–391 (KCYNSTGVDY…KSDLCDIPAC (80 aa)). A glycan (N-linked (GlcNAc...) asparagine) is linked at Asn-315. Residues 407–427 (ILVPSVAIPLAIAFLFFFICV) traverse the membrane as a helical segment. Over 428 to 937 (CRNNQKSSSP…HTESMISAEV (510 aa)) the chain is Cytoplasmic. The 274-residue stretch at 473–746 (VRFMEELGEC…PRFKDIHVRL (274 aa)) folds into the Protein kinase domain. ATP contacts are provided by residues 479-487 (LGECTFGKI) and Lys-506. Tyr-645 bears the Phosphotyrosine; by autocatalysis mark. Residues 753–762 (SSHTSSTTPS) are compositionally biased toward low complexity. 3 disordered regions span residues 753–778 (SSHTSSTTPSGGNATTQTTSLSASPV), 840–890 (GPPR…HMSI), and 916–937 (QSSLLGDSHIHGHTESMISAEV). Residues 763-778 (GGNATTQTTSLSASPV) are compositionally biased toward polar residues. Low complexity predominate over residues 854–864 (RSPSSASGSTS). The span at 865–880 (TGHVASLPSSGSNQEA) shows a compositional bias: polar residues.

Belongs to the protein kinase superfamily. Tyr protein kinase family. ROR subfamily. Interacts with ERBB2 and IGFBP5. At postnatal P0, expressed in heart, lung, liver, kidney, spleen and inner ear.

The protein resides in the membrane. Its subcellular location is the cell projection. It localises to the axon. In terms of biological role, has very low kinase activity in vitro and is unlikely to function as a tyrosine kinase in vivo. Receptor for ligand WNT5A which activate downstream NFkB signaling pathway and may result in the inhibition of WNT3A-mediated signaling. In inner ear, crucial for spiral ganglion neurons to innervate auditory hair cells. Via IGFBP5 ligand, forms a complex with ERBB2 to enhance CREB oncogenic signaling. In Mus musculus (Mouse), this protein is Inactive tyrosine-protein kinase transmembrane receptor ROR1 (Ror1).